Here is a 296-residue protein sequence, read N- to C-terminus: DNA-3-methyladenine glycosylase (296 aa).

Serine 110 carries the phosphoserine modification. The active-site Proton acceptor is the aspartate 209.

It belongs to the alkylbase DNA glycosidase AlkA family.

It localises to the nucleus. The enzyme catalyses Hydrolysis of alkylated DNA, releasing 3-methyladenine, 3-methylguanine, 7-methylguanine and 7-methyladenine.. Its function is as follows. Hydrolysis of the deoxyribose N-glycosidic bond to excise 3-methyladenine or 7-methyladenine from the damaged DNA polymer formed by alkylation lesions. In Saccharomyces cerevisiae (strain ATCC 204508 / S288c) (Baker's yeast), this protein is DNA-3-methyladenine glycosylase (MAG1).